The primary structure comprises 185 residues: Elongation factor P (185 aa).

The protein belongs to the elongation factor P family.

The protein resides in the cytoplasm. The protein operates within protein biosynthesis; polypeptide chain elongation. Its function is as follows. Involved in peptide bond synthesis. Stimulates efficient translation and peptide-bond synthesis on native or reconstituted 70S ribosomes in vitro. Probably functions indirectly by altering the affinity of the ribosome for aminoacyl-tRNA, thus increasing their reactivity as acceptors for peptidyl transferase. The chain is Elongation factor P from Clostridium perfringens (strain ATCC 13124 / DSM 756 / JCM 1290 / NCIMB 6125 / NCTC 8237 / Type A).